A 514-amino-acid chain; its full sequence is Intracellular exo-alpha-L-arabinofuranosidase (514 aa).

Alpha-L-arabinofuranose-binding residues include Glu47 and Asn194. The Proton donor/acceptor role is filled by Glu195. 3 residues coordinate alpha-L-arabinofuranose: Tyr261, Glu317, and Gln366. The active-site Nucleophile is the Glu317.

It belongs to the glycosyl hydrolase 51 family. In terms of assembly, homohexamer; trimer of dimers.

The protein localises to the cytoplasm. The catalysed reaction is Hydrolysis of terminal non-reducing alpha-L-arabinofuranoside residues in alpha-L-arabinosides.. The protein operates within glycan metabolism; L-arabinan degradation. In terms of biological role, involved in the degradation of arabinan and is a key enzyme in the complete degradation of the plant cell wall. Catalyzes the cleavage of terminal alpha-L-arabinofuranosyl residues in different hemicellulosic homopolysaccharides (branched and debranched arabinans) and heteropolysaccharides (arabinoxylans). This chain is Intracellular exo-alpha-L-arabinofuranosidase (asdII), found in Bacteroides ovatus.